The following is a 219-amino-acid chain: MTQDEMKKAAGWAALEYVEKDSIVGVGTGSTVNHFIDALATMKADIEGAVSSSEASTEKMKALGIPVFDLNSVDQLSVYVDGADEINGHMDMIKGGGAALTREKIVAAVADKFVCIVDNTKEVEVLGEFPLPVEVIPMARSYVARELVKLGGDPVYREGVVTDNGNVILDVYNMKIFNPKALEEQINQIVGVVTNGLFANRGADVLLVGTPEGVKTVKP.

Residues 28–31, 81–84, and 94–97 contribute to the substrate site; these read TGST, DGAD, and KGGG. The active-site Proton acceptor is glutamate 103. Lysine 121 serves as a coordination point for substrate.

This sequence belongs to the ribose 5-phosphate isomerase family. As to quaternary structure, homodimer.

It catalyses the reaction aldehydo-D-ribose 5-phosphate = D-ribulose 5-phosphate. Its pathway is carbohydrate degradation; pentose phosphate pathway; D-ribose 5-phosphate from D-ribulose 5-phosphate (non-oxidative stage): step 1/1. Functionally, catalyzes the reversible conversion of ribose-5-phosphate to ribulose 5-phosphate. The protein is Ribose-5-phosphate isomerase A of Shewanella loihica (strain ATCC BAA-1088 / PV-4).